A 328-amino-acid polypeptide reads, in one-letter code: GMP reductase (328 aa).

Cys-176 functions as the Thioimidate intermediate in the catalytic mechanism. 205–228 contacts NADP(+); it reads IIADGGIRTHGDIAKSIRFGASMI.

It belongs to the IMPDH/GMPR family. GuaC type 2 subfamily.

It catalyses the reaction IMP + NH4(+) + NADP(+) = GMP + NADPH + 2 H(+). Catalyzes the irreversible NADPH-dependent deamination of GMP to IMP. It functions in the conversion of nucleobase, nucleoside and nucleotide derivatives of G to A nucleotides, and in maintaining the intracellular balance of A and G nucleotides. This is GMP reductase from Streptococcus pneumoniae serotype 4 (strain ATCC BAA-334 / TIGR4).